The sequence spans 197 residues: MAERKARVERNTLETQITVEINLDGTGKANFDTGVPFLEHMMDQIARHGLVDLDITCKGDLHIDDHHTVEDIGITLGQAFKQAVGDKKGIRRYGHAYVPLDEALSRVVIDLSGRPGLLMDVPYTRASVGGFDVDLFAEFFQGFVNHSMVTLHIDNLKGKNTHHQIETVFKAFGRALRMAIEMDERMAGITPSTKGAL.

It belongs to the imidazoleglycerol-phosphate dehydratase family.

The protein localises to the cytoplasm. The catalysed reaction is D-erythro-1-(imidazol-4-yl)glycerol 3-phosphate = 3-(imidazol-4-yl)-2-oxopropyl phosphate + H2O. The protein operates within amino-acid biosynthesis; L-histidine biosynthesis; L-histidine from 5-phospho-alpha-D-ribose 1-diphosphate: step 6/9. This is Imidazoleglycerol-phosphate dehydratase from Marinobacter nauticus (strain ATCC 700491 / DSM 11845 / VT8) (Marinobacter aquaeolei).